A 638-amino-acid chain; its full sequence is Threonine--tRNA ligase (638 aa).

Positions 1–61 constitute a TGS domain; that stretch reads MPVITLPDGS…EHDARIEIVT (61 aa). Residues 243–534 form a catalytic region; it reads DHRKIAKAQD…LIEEYAGHFP (292 aa). C334, H385, and H511 together coordinate Zn(2+).

The protein belongs to the class-II aminoacyl-tRNA synthetase family. As to quaternary structure, homodimer. It depends on Zn(2+) as a cofactor.

The protein resides in the cytoplasm. It carries out the reaction tRNA(Thr) + L-threonine + ATP = L-threonyl-tRNA(Thr) + AMP + diphosphate + H(+). In terms of biological role, catalyzes the attachment of threonine to tRNA(Thr) in a two-step reaction: L-threonine is first activated by ATP to form Thr-AMP and then transferred to the acceptor end of tRNA(Thr). Also edits incorrectly charged L-seryl-tRNA(Thr). The sequence is that of Threonine--tRNA ligase from Idiomarina loihiensis (strain ATCC BAA-735 / DSM 15497 / L2-TR).